The sequence spans 520 residues: Glucose starvation modulator protein 1 (520 aa).

Residues 20 to 48 (CVFCHEKHLQCSNERPCKNCVKRGLAHEC) constitute a DNA-binding region (zn(2)-C6 fungal-type). The PAS domain maps to 376-445 (DYEKLSQLNS…FRLFKTVAVG (70 aa)).

The protein belongs to the ERT1/acuK family.

It is found in the nucleus. Functionally, transcription factor which regulates nonfermentable carbon utilization. The protein is Glucose starvation modulator protein 1 (GSM1) of Scheffersomyces stipitis (strain ATCC 58785 / CBS 6054 / NBRC 10063 / NRRL Y-11545) (Yeast).